The following is a 315-amino-acid chain: Taste receptor type 2 member 3 (315 aa).

Topologically, residues 1–5 (MGLTE) are extracellular. The helical transmembrane segment at 6–26 (GVFLILSGTQFTLGILVNCFI) threads the bilayer. At 27–41 (ELVNGSSWFKTKRMS) the chain is on the cytoplasmic side. Residues 42–62 (LSDFIITTLALLRIILLCIIL) traverse the membrane as a helical segment. Topologically, residues 63 to 93 (TDSFLIEFSPNTHDSGIIMQIIDVSWTFTNH) are extracellular. A helical membrane pass occupies residues 94–114 (LSIWLATCLGVLYCLKIASFS). The Cytoplasmic segment spans residues 115-127 (HPTFLWLKWRVSR). A helical membrane pass occupies residues 128 to 148 (VMVWMLLGALLLSCGSTASLI). The Extracellular segment spans residues 149-185 (NEFKLYSVFRGIEATRNVTEHFRKKRSEYYLIHVLGT). A glycan (N-linked (GlcNAc...) asparagine) is linked at N165. The helical transmembrane segment at 186 to 206 (LWYLPPLIVSLASYSLLIFSL) threads the bilayer. The Cytoplasmic portion of the chain corresponds to 207–233 (GRHTRQMLQNGTSSRDPTTEAHKRAIR). A helical membrane pass occupies residues 234 to 254 (IILSFFFLFLLYFLAFLIASF). The Extracellular portion of the chain corresponds to 255–265 (GNFLPKTKMAK). Residues 266 to 286 (MIGEVMTMFYPAGHSFILILG) form a helical membrane-spanning segment. Over 287–315 (NSKLKQTFVVMLRCESGHLKPGSKGPIFS) the chain is Cytoplasmic.

It belongs to the G-protein coupled receptor T2R family.

The protein localises to the membrane. Functionally, gustducin-coupled receptor implicated in the perception of bitter compounds in the oral cavity and the gastrointestinal tract. Signals through PLCB2 and the calcium-regulated cation channel TRPM5. The chain is Taste receptor type 2 member 3 (TAS2R3) from Gorilla gorilla gorilla (Western lowland gorilla).